The sequence spans 86 residues: Neuropeptide precursor capa-1 (86 aa).

An N-terminal signal peptide occupies residues 1–19 (MLLWIVATLLIFSLPVSTA).

Expressed in two pairs of neurons in the anterior part of the nervous system (at protein level).

In terms of biological role, encodes at least three neuropeptides: two of the periviscerokinin family (APHPSSALLVPYPRV-amide and LYMARV-amide) and one pyrokinin (AFFYTPRI-amide). Putative ligand for neuromedin U receptor homolog nmur-2. The protein is Neuropeptide precursor capa-1 of Caenorhabditis elegans.